We begin with the raw amino-acid sequence, 397 residues long: Acetate kinase 2 (397 aa).

Asn-8 serves as a coordination point for Mg(2+). Position 15 (Lys-15) interacts with ATP. Arg-89 lines the substrate pocket. Asp-146 serves as the catalytic Proton donor/acceptor. ATP contacts are provided by residues 206-210 (HLGNG), 281-283 (DFR), and 329-333 (GVGEN). Mg(2+) is bound at residue Glu-380.

The protein belongs to the acetokinase family. As to quaternary structure, homodimer. It depends on Mg(2+) as a cofactor. Mn(2+) serves as cofactor.

The protein resides in the cytoplasm. It catalyses the reaction acetate + ATP = acetyl phosphate + ADP. It functions in the pathway metabolic intermediate biosynthesis; acetyl-CoA biosynthesis; acetyl-CoA from acetate: step 1/2. In terms of biological role, catalyzes the formation of acetyl phosphate from acetate and ATP. Can also catalyze the reverse reaction. In Listeria monocytogenes serovar 1/2a (strain ATCC BAA-679 / EGD-e), this protein is Acetate kinase 2.